The chain runs to 127 residues: Aspartate 1-decarboxylase (127 aa).

Catalysis depends on S25, which acts as the Schiff-base intermediate with substrate; via pyruvic acid. S25 is subject to Pyruvic acid (Ser). T57 serves as a coordination point for substrate. Y58 functions as the Proton donor in the catalytic mechanism. Position 73–75 (73–75 (GSA)) interacts with substrate.

This sequence belongs to the PanD family. In terms of assembly, heterooctamer of four alpha and four beta subunits. Requires pyruvate as cofactor. Post-translationally, is synthesized initially as an inactive proenzyme, which is activated by self-cleavage at a specific serine bond to produce a beta-subunit with a hydroxyl group at its C-terminus and an alpha-subunit with a pyruvoyl group at its N-terminus.

It is found in the cytoplasm. The enzyme catalyses L-aspartate + H(+) = beta-alanine + CO2. It functions in the pathway cofactor biosynthesis; (R)-pantothenate biosynthesis; beta-alanine from L-aspartate: step 1/1. Catalyzes the pyruvoyl-dependent decarboxylation of aspartate to produce beta-alanine. This is Aspartate 1-decarboxylase from Polaromonas naphthalenivorans (strain CJ2).